Reading from the N-terminus, the 688-residue chain is Beta-galactosidase BglY (688 aa).

A substrate-binding site is contributed by R118. Position 122 (C122) interacts with Zn(2+). Residue N156 coordinates substrate. E157 serves as the catalytic Proton donor. Zn(2+)-binding residues include C162, C164, and C167. E313 serves as the catalytic Nucleophile. Residues W321 and 361 to 364 (EKFH) contribute to the substrate site.

This sequence belongs to the glycosyl hydrolase 42 family.

The catalysed reaction is Hydrolysis of terminal non-reducing beta-D-galactose residues in beta-D-galactosides.. Ca(2+), Mg(2+) and EDTA have little effect on enzyme activity at 1-10 mM. Zn(2+) at 3, 5, 7 or 10 mM inhibits activity by 20%, 30%, 40% and 65%, respectively. Hydrolyzes o-nitrophenyl-beta-D-galactopyranoside (ONPG) and p-nitrophenyl-beta-D-fucopyranoside (PNPF), but not p-nitrophenyl-beta-D-glucopyranoside (PNPG), p-nitrophenyl-beta-D-xylopyranoside (PNPX) or p-nitrophenyl-beta-D-arabinopyranoside (PNPA). Also hydrolyzes lactose, including lactose in milk. In Alicyclobacillus acidocaldarius subsp. acidocaldarius (strain ATCC 27009 / DSM 446 / BCRC 14685 / JCM 5260 / KCTC 1825 / NBRC 15652 / NCIMB 11725 / NRRL B-14509 / 104-IA) (Bacillus acidocaldarius), this protein is Beta-galactosidase BglY (bglY).